The sequence spans 82 residues: DNA gyrase inhibitor YacG (82 aa).

Zn(2+) contacts are provided by Cys9, Cys12, Cys27, and Cys31. Residues 44–82 (IGLPHEGDPGDAPVEYLDDRDLTQPSPERQNESFHRYSE) form a disordered region. Residues 72–82 (RQNESFHRYSE) show a composition bias toward basic and acidic residues.

It belongs to the DNA gyrase inhibitor YacG family. Interacts with GyrB. Zn(2+) serves as cofactor.

Inhibits all the catalytic activities of DNA gyrase by preventing its interaction with DNA. Acts by binding directly to the C-terminal domain of GyrB, which probably disrupts DNA binding by the gyrase. The protein is DNA gyrase inhibitor YacG of Rhodopirellula baltica (strain DSM 10527 / NCIMB 13988 / SH1).